A 236-amino-acid chain; its full sequence is uncharacterized protein (236 aa).

This sequence belongs to the RHS family.

This is an uncharacterized protein from Escherichia coli (strain K12).